A 535-amino-acid polypeptide reads, in one-letter code: Probable deoxycholate-binding periplasmic protein YgiS (535 aa).

An N-terminal signal peptide occupies residues 1–20; sequence MYTRNLLWLVSLVSAAPLYA.

Belongs to the bacterial solute-binding protein 5 family.

It localises to the periplasm. Probably part of a deoxycholate transport system. Its expression in the presence of deoxycholate in a ygiS deletion mutant increases intracellular deoxycholate levels and decreases cell growth; higher expression in the presence of deoxycholate inhibits cell growth completely. Bile acid detergents such as deoxycholate are important for host defense against bacterial growth in the gall bladder and duodenum. This is Probable deoxycholate-binding periplasmic protein YgiS (ygiS) from Escherichia coli (strain K12).